The primary structure comprises 77 residues: U10-lycotoxin-Ls1a (77 aa).

A signal peptide spans Met1–Ala20. Residues Glu21 to Arg26 constitute a propeptide that is removed on maturation.

Belongs to the neurotoxin 19 (CSTX) family. 09 (U10-Lctx) subfamily. Contains 4 disulfide bonds. Expressed by the venom gland.

Its subcellular location is the secreted. This chain is U10-lycotoxin-Ls1a, found in Lycosa singoriensis (Wolf spider).